A 427-amino-acid polypeptide reads, in one-letter code: Glutamyl-tRNA(Gln) amidotransferase subunit D (427 aa).

One can recognise an Asparaginase/glutaminase domain in the interval 74–407 (ERVYIIGAGG…EVVRKMFQRN (334 aa)). Catalysis depends on residues Thr84, Thr160, Asp161, and Lys240.

Belongs to the asparaginase 1 family. GatD subfamily. As to quaternary structure, heterodimer of GatD and GatE.

It catalyses the reaction L-glutamyl-tRNA(Gln) + L-glutamine + ATP + H2O = L-glutaminyl-tRNA(Gln) + L-glutamate + ADP + phosphate + H(+). Allows the formation of correctly charged Gln-tRNA(Gln) through the transamidation of misacylated Glu-tRNA(Gln) in organisms which lack glutaminyl-tRNA synthetase. The reaction takes place in the presence of glutamine and ATP through an activated gamma-phospho-Glu-tRNA(Gln). The GatDE system is specific for glutamate and does not act on aspartate. This chain is Glutamyl-tRNA(Gln) amidotransferase subunit D, found in Aeropyrum pernix (strain ATCC 700893 / DSM 11879 / JCM 9820 / NBRC 100138 / K1).